The primary structure comprises 275 residues: Large ribosomal subunit protein uL2 (275 aa).

Residues 223-260 (VAMNPVDHPHGGGEGRTSGGRHPVSPWGLPTKGYKTRS) form a disordered region.

Belongs to the universal ribosomal protein uL2 family. As to quaternary structure, part of the 50S ribosomal subunit. Forms a bridge to the 30S subunit in the 70S ribosome.

In terms of biological role, one of the primary rRNA binding proteins. Required for association of the 30S and 50S subunits to form the 70S ribosome, for tRNA binding and peptide bond formation. It has been suggested to have peptidyltransferase activity; this is somewhat controversial. Makes several contacts with the 16S rRNA in the 70S ribosome. The chain is Large ribosomal subunit protein uL2 from Legionella pneumophila (strain Paris).